A 233-amino-acid chain; its full sequence is H-2 class II histocompatibility antigen, A-R alpha chain (233 aa).

Residues 1–88 (EDDIEADHVG…KRSNFTPAAN (88 aa)) form an alpha-1 region. Over 1 to 195 (EDDIEADHVG…IPAPMSELTE (195 aa)) the chain is Extracellular. The tract at residues 89 to 182 (EAPQATVFPK…GLEEPVLKHW (94 aa)) is alpha-2. The region spanning 91-183 (PQATVFPKSP…LEEPVLKHWE (93 aa)) is the Ig-like C1-type domain. C111 and C167 form a disulfide bridge. A glycan (N-linked (GlcNAc...) asparagine) is linked at N122. Residues 183-195 (EPEIPAPMSELTE) form a connecting peptide region. Residues 196–221 (TVVCALGLSVGLVGIVVGTIFIIQGL) form a helical membrane-spanning segment. Over 222-233 (RSGGTSRHPGPL) the chain is Cytoplasmic.

Belongs to the MHC class II family.

It localises to the membrane. This chain is H-2 class II histocompatibility antigen, A-R alpha chain (H2-Aa), found in Mus musculus (Mouse).